The following is a 326-amino-acid chain: Phospholipid scramblase 4 (326 aa).

The interval 1–32 is disordered; it reads MSGLVPTAPEQPTEEMENQIKSPTAVPDAPPD. Positions 1 to 94 are proline-rich domain (PRD); it reads MSGLVPTAPE…PVTNQPAPIM (94 aa). Topologically, residues 1 to 299 are cytoplasmic; it reads MSGLVPTAPE…IRFPLALDVK (299 aa). The SH3-binding 1 motif lies at 18-25; the sequence is NQIKSPTA. A PPxY motif motif is present at residues 30-33; it reads PPDY. Residues 41-49 carry the SH3-binding 2 motif; that stretch reads PAGPVASPS. Phosphotyrosine; by ABL occurs at positions 79 and 84. Positions 94–102 match the SH3-binding 3 motif; the sequence is MWMAGPAPV. Residues cysteine 193, cysteine 194, cysteine 195, cysteine 197, and cysteine 198 are each lipidated (S-palmitoyl cysteine). The chain crosses the membrane as a helical span at residues 300-316; it reads MKAMIFGSCFLIDFMYF. The Extracellular segment spans residues 317–326; sequence ERPPPRRMSR.

The protein belongs to the phospholipid scramblase family. Interacts with PDCD6. Interacts with KPNA2; this interaction mediates the nucleus import of PLSCR4. It depends on Ca(2+) as a cofactor. The cofactor is Mg(2+). Requires Zn(2+) as cofactor.

Its subcellular location is the cell membrane. The protein resides in the nucleus. It carries out the reaction a 1,2-diacyl-sn-glycero-3-phosphocholine(in) = a 1,2-diacyl-sn-glycero-3-phosphocholine(out). The catalysed reaction is a 1,2-diacyl-sn-glycero-3-phospho-L-serine(in) = a 1,2-diacyl-sn-glycero-3-phospho-L-serine(out). Functionally, catalyzes metal ion-induced ATP-independent rapid bidirectional and non-specific movement of phospholipids (lipid scrambling or lipid flip-flop) between the inner and outer leaflet of the plasma membrane and participates in the redistribution of phospholipids between membrane leaflets. Metal ions bind to the calcium-binding site and induce conformation change in the protein. Has a greater affi nity for Ca(2+) than Mg(2+) and Zn(2+). The chain is Phospholipid scramblase 4 from Mus musculus (Mouse).